The primary structure comprises 427 residues: tRNA(Ile)-lysidine synthase (427 aa).

Residue 18–23 (SGGLDS) coordinates ATP.

The protein belongs to the tRNA(Ile)-lysidine synthase family.

Its subcellular location is the cytoplasm. The catalysed reaction is cytidine(34) in tRNA(Ile2) + L-lysine + ATP = lysidine(34) in tRNA(Ile2) + AMP + diphosphate + H(+). Functionally, ligates lysine onto the cytidine present at position 34 of the AUA codon-specific tRNA(Ile) that contains the anticodon CAU, in an ATP-dependent manner. Cytidine is converted to lysidine, thus changing the amino acid specificity of the tRNA from methionine to isoleucine. This chain is tRNA(Ile)-lysidine synthase, found in Pseudomonas putida (strain ATCC 47054 / DSM 6125 / CFBP 8728 / NCIMB 11950 / KT2440).